Here is a 2005-residue protein sequence, read N- to C-terminus: MAQSVLVPPGPDSFRFFTRESLAAIEQRIAEEKAKRPKQERKDEDDENGPKPNSDLEAGKSLPFIYGDIPPEMVSVPLEDLDPYYINKKTFIVLNKGKAISRFSATPALYILTPFNPIRKLAIKILVHSLFNMLIMCTILTNCVFMTMSNPPDWTKNVEYTFTGIYTFESLIKILARGFCLEDFTFLRDPWNWLDFTVITFAYVTEFVDLGNVSALRTFRVLRALKTISVIPGLKTIVGALIQSVKKLSDVMILTVFCLSVFALIGLQLFMGNLRNKCLQWPPDNSSFEINITSFFNNSLDGNGTTFNRTVSIFNWDEYIEDKSHFYFLEGQNDALLCGNSSDAGQCPEGYICVKAGRNPNYGYTSFDTFSWAFLSLFRLMTQDFWENLYQLTLRAAGKTYMIFFVLVIFLGSFYLINLILAVVAMAYEEQNQATLEEAEQKEAEFQQMLEQLKKQQEEAQAAAAAASAESRDFSGAGGIGVFSESSSVASKLSSKSEKELKNRRKKKKQKEQSGEEEKNDRVRKSESEDSIRRKGFRFSLEGSRLTYEKRFSSPHQSLLSIRGSLFSPRRNSRASLFSFRGRAKDIGSENDFADDEHSTFEDNDSRRDSLFVPHRHGERRHSNVSQASRASRVLPILPMNGKMHSAVDCNGVVSLVGGPSTLTSAGQLLPEGTTTETEIRKRRSSSYHVSMDLLEDPTSRQRAMSIASILTNTMEELEESRQKCPPCWYKFANMCLIWDCCKPWLKVKHLVNLVVMDPFVDLAITICIVLNTLFMAMEHYPMTEQFSSVLSVGNLVFTGIFTAEMFLKIIAMDPYYYFQEGWNIFDGFIVSLSLMELGLANVEGLSVLRSFRLLRVFKLAKSWPTLNMLIKIIGNSVGALGNLTLVLAIIVFIFAVVGMQLFGKSYKECVCKISNDCELPRWHMHDFFHSFLIVFRVLCGEWIETMWDCMEVAGQTMCLTVFMMVMVIGNLVVLNLFLALLLSSFSSDNLAATDDDNEMNNLQIAVGRMQKGIDFVKRKIREFIQKAFVRKQKALDEIKPLEDLNNKKDSCISNHTTIEIGKDLNYLKDGNGTTSGIGSSVEKYVVDESDYMSFINNPSLTVTVPIAVGESDFENLNTEEFSSESDMEESKEKLNATSSSEGSTVDIGAPAEGEQPEVEPEESLEPEACFTEDCVRKFKCCQISIEEGKGKLWWNLRKTCYKIVEHNWFETFIVFMILLSSGALAFEDIYIEQRKTIKTMLEYADKVFTYIFILEMLLKWVAYGFQVYFTNAWCWLDFLIVDVSLVSLTANALGYSELGAIKSLRTLRALRPLRALSRFEGMRVVVNALLGAIPSIMNVLLVCLIFWLIFSIMGVNLFAGKFYHCINYTTGEMFDVSVVNNYSECKALIESNQTARWKNVKVNFDNVGLGYLSLLQVATFKGWMDIMYAAVDSRNVELQPKYEDNLYMYLYFVIFIIFGSFFTLNLFIGVIIDNFNQQKKKFGGQDIFMTEEQKKYYNAMKKLGSKKPQKPIPRPANKFQGMVFDFVTKQVFDISIMILICLNMVTMMVETDDQSQEMTNILYWINLVFIVLFTGECVLKLISLRYYYFTIGWNIFDFVVVILSIVGMFLAELIEKYFVSPTLFRVIRLARIGRILRLIKGAKGIRTLLFALMMSLPALFNIGLLLFLVMFIYAIFGMSNFAYVKREVGIDDMFNFETFGNSMICLFQITTSAGWDGLLAPILNSGPPDCDPDKDHPGSSVKGDCGNPSVGIFFFVSYIIISFLVVVNMYIAVILENFSVATEESAEPLSEDDFEMFYEVWEKFDPDATQFIEFAKLSDFADALDPPLLIAKPNKVQLIAMDLPMVSGDRIHCLDILFAFTKRVLGESGEMDALRIQMEERFMASNPSKVSYEPITTTLKRKQEEVSAIIIQRAYRRYLLKQKVKKVSSIYKKDKGKECDGTPIKEDTLIDKLNENSTPEKTDMTPSTTSPPSYDSVTKPEKEKFEKDKSEKEDKGKDIRESKK.

Residues 1–129 (MAQSVLVPPG…KLAIKILVHS (129 aa)) are Cytoplasmic-facing. Residue serine 4 is modified to Phosphoserine. Positions 28-61 (RIAEEKAKRPKQERKDEDDENGPKPNSDLEAGKS) are disordered. Lysine 38 is covalently cross-linked (Glycyl lysine isopeptide (Lys-Gly) (interchain with G-Cter in SUMO1)). The I repeat unit spans residues 111–456 (ILTPFNPIRK…QQMLEQLKKQ (346 aa)). Residues 130-148 (LFNMLIMCTILTNCVFMTM) traverse the membrane as a helical segment. The Extracellular portion of the chain corresponds to 149 to 155 (SNPPDWT). The chain crosses the membrane as a helical span at residues 156-176 (KNVEYTFTGIYTFESLIKILA). Residues 177–190 (RGFCLEDFTFLRDP) are Cytoplasmic-facing. Residues 191-208 (WNWLDFTVITFAYVTEFV) traverse the membrane as a helical segment. Residues 209–214 (DLGNVS) lie on the Extracellular side of the membrane. Asparagine 212 is a glycosylation site (N-linked (GlcNAc...) asparagine). Residues 215–231 (ALRTFRVLRALKTISVI) traverse the membrane as a helical segment. Topologically, residues 232–250 (PGLKTIVGALIQSVKKLSD) are cytoplasmic. Residues 251–270 (VMILTVFCLSVFALIGLQLF) traverse the membrane as a helical segment. Topologically, residues 271-369 (MGNLRNKCLQ…PNYGYTSFDT (99 aa)) are extracellular. The cysteines at positions 278 and 338 are disulfide-linked. Residues asparagine 285, asparagine 291, asparagine 297, asparagine 303, asparagine 308, and asparagine 340 are each glycosylated (N-linked (GlcNAc...) asparagine). An intramembrane region (pore-forming) is located at residues 370–394 (FSWAFLSLFRLMTQDFWENLYQLTL). Residues 395–401 (RAAGKTY) lie on the Extracellular side of the membrane. Residues 402–422 (MIFFVLVIFLGSFYLINLILA) traverse the membrane as a helical segment. Topologically, residues 423 to 759 (VVAMAYEEQN…HLVNLVVMDP (337 aa)) are cytoplasmic. 17 positions are modified to phosphoserine: serine 468, serine 471, serine 484, serine 526, serine 528, serine 531, serine 553, serine 554, serine 558, serine 573, serine 576, serine 589, serine 610, serine 623, serine 686, serine 687, and serine 721. Residues 494 to 529 (SSKSEKELKNRRKKKKQKEQSGEEEKNDRVRKSESE) are disordered. Positions 511 to 529 (KEQSGEEEKNDRVRKSESE) are enriched in basic and acidic residues. The interval 590-610 (ENDFADDEHSTFEDNDSRRDS) is disordered. The span at 596–610 (DEHSTFEDNDSRRDS) shows a compositional bias: basic and acidic residues. Residues 741–1013 (CCKPWLKVKH…QIAVGRMQKG (273 aa)) form an II repeat. Residues 760–778 (FVDLAITICIVLNTLFMAM) traverse the membrane as a helical segment. Residues 779–789 (EHYPMTEQFSS) are Extracellular-facing. A helical transmembrane segment spans residues 790-809 (VLSVGNLVFTGIFTAEMFLK). Topologically, residues 810–823 (IIAMDPYYYFQEGW) are cytoplasmic. Residues 824–843 (NIFDGFIVSLSLMELGLANV) traverse the membrane as a helical segment. Residues 844 to 845 (EG) are Extracellular-facing. The chain crosses the membrane as a helical span at residues 846–863 (LSVLRSFRLLRVFKLAKS). The Cytoplasmic portion of the chain corresponds to 864 to 879 (WPTLNMLIKIIGNSVG). A helical membrane pass occupies residues 880–898 (ALGNLTLVLAIIVFIFAVV). Residues 899 to 927 (GMQLFGKSYKECVCKISNDCELPRWHMHD) lie on the Extracellular side of the membrane. Residues cysteine 912 and cysteine 918 are joined by a disulfide bond. Positions 917–918 (DC) are binds SCN2B. Positions 928–948 (FFHSFLIVFRVLCGEWIETMW) form an intramembrane region, pore-forming. At 949-961 (DCMEVAGQTMCLT) the chain is on the extracellular side. The cysteines at positions 950 and 959 are disulfide-linked. A helical membrane pass occupies residues 962–982 (VFMMVMVIGNLVVLNLFLALL). Topologically, residues 983-1209 (LSSFSSDNLA…TCYKIVEHNW (227 aa)) are cytoplasmic. The interval 1120-1165 (EEFSSESDMEESKEKLNATSSSEGSTVDIGAPAEGEQPEVEPEESL) is disordered. Residues 1155–1165 (EQPEVEPEESL) are compositionally biased toward acidic residues. An III repeat occupies 1190 to 1504 (KGKLWWNLRK…KKYYNAMKKL (315 aa)). Residues 1210-1227 (FETFIVFMILLSSGALAF) traverse the membrane as a helical segment. Topologically, residues 1228 to 1240 (EDIYIEQRKTIKT) are extracellular. Residues 1241-1259 (MLEYADKVFTYIFILEMLL) traverse the membrane as a helical segment. The Cytoplasmic segment spans residues 1260 to 1273 (KWVAYGFQVYFTNA). Residues 1274–1292 (WCWLDFLIVDVSLVSLTAN) traverse the membrane as a helical segment. Residues 1293-1300 (ALGYSELG) lie on the Extracellular side of the membrane. The helical transmembrane segment at 1301–1319 (AIKSLRTLRALRPLRALSR) threads the bilayer. Residues 1320–1336 (FEGMRVVVNALLGAIPS) lie on the Cytoplasmic side of the membrane. Residues 1337–1356 (IMNVLLVCLIFWLIFSIMGV) traverse the membrane as a helical segment. Residues 1357–1408 (NLFAGKFYHCINYTTGEMFDVSVVNNYSECKALIESNQTARWKNVKVNFDNV) lie on the Extracellular side of the membrane. A disulfide bridge links cysteine 1366 with cysteine 1386. N-linked (GlcNAc...) asparagine glycosylation is found at asparagine 1368, asparagine 1382, and asparagine 1393. The pore-forming intramembrane region spans 1409 to 1430 (GLGYLSLLQVATFKGWMDIMYA). Over 1431–1447 (AVDSRNVELQPKYEDNL) the chain is Extracellular. A helical membrane pass occupies residues 1448–1469 (YMYLYFVIFIIFGSFFTLNLFI). The Cytoplasmic segment spans residues 1470–1532 (GVIIDNFNQQ…MVFDFVTKQV (63 aa)). Residue serine 1506 is modified to Phosphoserine; by PKC. One copy of the IV repeat lies at 1513 to 1811 (IPRPANKFQG…WEKFDPDATQ (299 aa)). Residues 1533 to 1550 (FDISIMILICLNMVTMMV) form a helical membrane-spanning segment. Residues 1551-1561 (ETDDQSQEMTN) lie on the Extracellular side of the membrane. Residues 1562-1580 (ILYWINLVFIVLFTGECVL) traverse the membrane as a helical segment. The Cytoplasmic segment spans residues 1581-1592 (KLISLRYYYFTI). A helical transmembrane segment spans residues 1593-1610 (GWNIFDFVVVILSIVGMF). Residues 1611-1623 (LAELIEKYFVSPT) lie on the Extracellular side of the membrane. Residues 1624–1640 (LFRVIRLARIGRILRLI) traverse the membrane as a helical segment. The Cytoplasmic portion of the chain corresponds to 1641–1659 (KGAKGIRTLLFALMMSLPA). Residues 1660–1677 (LFNIGLLLFLVMFIYAIF) form a helical membrane-spanning segment. Residues 1678–1699 (GMSNFAYVKREVGIDDMFNFET) lie on the Extracellular side of the membrane. An intramembrane region (pore-forming) is located at residues 1700 to 1722 (FGNSMICLFQITTSAGWDGLLAP). Residues 1723-1752 (ILNSGPPDCDPDKDHPGSSVKGDCGNPSVG) lie on the Extracellular side of the membrane. Cysteine 1731 and cysteine 1746 are disulfide-bonded. Residues 1753–1775 (IFFFVSYIIISFLVVVNMYIAVI) traverse the membrane as a helical segment. Over 1776–2005 (LENFSVATEE…KGKDIRESKK (230 aa)) the chain is Cytoplasmic. Residues 1905-1934 (EEVSAIIIQRAYRRYLLKQKVKKVSSIYKK) enclose the IQ domain. Serine 1930 bears the Phosphoserine mark. Residues 1935–1964 (DKGKECDGTPIKEDTLIDKLNENSTPEKTD) are compositionally biased toward basic and acidic residues. The interval 1935 to 2005 (DKGKECDGTP…KGKDIRESKK (71 aa)) is disordered. Threonine 1943, threonine 1963, and threonine 1966 each carry phosphothreonine. Phosphoserine is present on serine 1971. Residues 1979–2005 (TKPEKEKFEKDKSEKEDKGKDIRESKK) show a composition bias toward basic and acidic residues.

The protein belongs to the sodium channel (TC 1.A.1.10) family. Nav1.2/SCN2A subfamily. Heterooligomer of a large alpha subunit and a smaller beta subunit. Heterooligomer with SCN2B or SCN4B; disulfide-linked. Heterooligomer with SCN1B or SCN3B; non-covalently linked. Interacts with NEDD4L. Interacts with CALM. Interacts with TMEM233. Interacts with the conotoxin GVIIJ. Interacts with the spider beta/delta-theraphotoxin-Pre1a. Interacts with the conotoxin KIIIA. Interacts with the spider protoxin-II. May be ubiquitinated by NEDD4L; which would promote its endocytosis. In terms of processing, phosphorylation at Ser-1506 by PKC in a highly conserved cytoplasmic loop slows inactivation of the sodium channel and reduces peak sodium currents. Post-translationally, sumoylated at Lys-38. Sumoylation is induced by hypoxia, increases voltage-gated sodium current and mediates the early response to acute hypoxia in neurons. Sumoylated SCN2A is located at the cell membrane.

It localises to the cell membrane. The enzyme catalyses Na(+)(in) = Na(+)(out). Mediates the voltage-dependent sodium ion permeability of excitable membranes. Assuming opened or closed conformations in response to the voltage difference across the membrane, the protein forms a sodium-selective channel through which Na(+) ions may pass in accordance with their electrochemical gradient. Implicated in the regulation of hippocampal replay occurring within sharp wave ripples (SPW-R) important for memory. The chain is Sodium channel protein type 2 subunit alpha from Homo sapiens (Human).